The chain runs to 238 residues: Ribonuclease 3 (238 aa).

The region spanning 4-127 is the RNase III domain; sequence IEEFEKRLGY…TMGAIYLETG (124 aa). Glu40 contributes to the Mg(2+) binding site. Residue Asp44 is part of the active site. Residues Asn113 and Glu116 each coordinate Mg(2+). Residue Glu116 is part of the active site. Positions 154–223 constitute a DRBM domain; the sequence is DYKTALQELT…ARIALEIFHR (70 aa).

The protein belongs to the ribonuclease III family. As to quaternary structure, homodimer. It depends on Mg(2+) as a cofactor.

The protein resides in the cytoplasm. The catalysed reaction is Endonucleolytic cleavage to 5'-phosphomonoester.. Its function is as follows. Digests double-stranded RNA. Involved in the processing of primary rRNA transcript to yield the immediate precursors to the large and small rRNAs (23S and 16S). Processes some mRNAs, and tRNAs when they are encoded in the rRNA operon. Processes pre-crRNA and tracrRNA of type II CRISPR loci if present in the organism. The polypeptide is Ribonuclease 3 (Wolinella succinogenes (strain ATCC 29543 / DSM 1740 / CCUG 13145 / JCM 31913 / LMG 7466 / NCTC 11488 / FDC 602W) (Vibrio succinogenes)).